We begin with the raw amino-acid sequence, 347 residues long: Iron-sulfur cluster assembly protein SufC (347 aa).

Positions 100–346 constitute an ABC transporter domain; it reads LEIKDLHAIE…ENKGYSQFLK (247 aa). 134-141 provides a ligand contact to ATP; sequence GRNGSGKS.

Belongs to the ABC transporter superfamily. Ycf16 family. Component of a complex composed of SufB, SufC and SufD in a stoichiometric ratio of 1:2:1. Interacts with SufB. Interacts with SufD; the interaction enhances the ATPase activity of SufC. In terms of processing, proteolytically cleaved.

The protein localises to the plastid. It localises to the apicoplast. It catalyses the reaction ATP + H2O = ADP + phosphate + H(+). It participates in cofactor biosynthesis; iron-sulfur cluster biosynthesis. Participates in the sulfur mobilization (SUF) pathway for iron-sulfur (Fe-S) cluster biogenesis. As part of a complex consisting of SufB-SufC(2)-SufD, involved in assembly of [4Fe-4S] clusters. Exhibits ATPase activity. The polypeptide is Iron-sulfur cluster assembly protein SufC (Plasmodium falciparum (isolate 3D7)).